Consider the following 862-residue polypeptide: DNA mismatch repair protein MutS (862 aa).

Residue 604-611 coordinates ATP; it reads GPNMAGKS.

It belongs to the DNA mismatch repair MutS family.

This protein is involved in the repair of mismatches in DNA. It is possible that it carries out the mismatch recognition step. This protein has a weak ATPase activity. In Brevibacillus brevis (strain 47 / JCM 6285 / NBRC 100599), this protein is DNA mismatch repair protein MutS.